The primary structure comprises 350 residues: Adenine deaminase (350 aa).

Zn(2+)-binding residues include His-24, His-26, and His-207. Catalysis depends on Glu-210, which acts as the Proton donor. Asp-288 contacts Zn(2+). Asp-289 contacts substrate.

The protein belongs to the metallo-dependent hydrolases superfamily. Adenosine and AMP deaminases family. Adenine deaminase type 2 subfamily. The cofactor is Zn(2+).

The enzyme catalyses adenine + H2O + H(+) = hypoxanthine + NH4(+). Functionally, catalyzes the hydrolytic deamination of adenine to hypoxanthine. Plays an important role in the purine salvage pathway and in nitrogen catabolism. This is Adenine deaminase from Paraburkholderia xenovorans (strain LB400).